Reading from the N-terminus, the 123-residue chain is Small ribosomal subunit protein uS12cz/uS12cy (123 aa).

The protein belongs to the universal ribosomal protein uS12 family. In terms of assembly, part of the 30S ribosomal subunit.

It localises to the plastid. Its subcellular location is the chloroplast. With S4 and S5 plays an important role in translational accuracy. Located at the interface of the 30S and 50S subunits. This chain is Small ribosomal subunit protein uS12cz/uS12cy (rps12-A), found in Populus alba (White poplar).